The chain runs to 390 residues: Protein DDI1 homolog (390 aa).

D205 is an active-site residue. The segment at 322–344 is disordered; that stretch reads MHAPRHQDPATTATTASNPAAPV. The segment covering 330–343 has biased composition (low complexity); the sequence is PATTATTASNPAAP.

The protein belongs to the DDI1 family.

Its subcellular location is the cytoplasm. With respect to regulation, inhibited by pepstatin, diazoacetyl-DL-norleucine methyl ester (DAN) and nelfinavir. Inhibited by the proteinase inhibitors lopinavir and ritonavir. Aspartic protease. The sequence is that of Protein DDI1 homolog from Leishmania major.